We begin with the raw amino-acid sequence, 149 residues long: Calmodulin-3 (149 aa).

Position 2 is an N-acetylalanine (Ala-2). 4 EF-hand domains span residues 8–43 (DQIA…LGQN), 44–79 (PTEA…KMKD), 81–116 (DSEE…LGEK), and 117–149 (LTDE…MMAK). Positions 21, 23, 25, 27, 32, 57, 59, 61, 63, 68, 94, 96, 98, and 105 each coordinate Ca(2+). Lys-116 is subject to N6,N6,N6-trimethyllysine. Ca(2+)-binding residues include Asp-130, Asp-132, Asp-134, Gln-136, and Glu-141.

Belongs to the calmodulin family.

Calmodulin mediates the control of a large number of enzymes, ion channels and other proteins by Ca(2+). Among the enzymes to be stimulated by the calmodulin-Ca(2+) complex are a number of protein kinases and phosphatases. This is Calmodulin-3 (CAM3) from Oryza sativa subsp. indica (Rice).